The primary structure comprises 612 residues: Netrin unc-6 (612 aa).

The first 21 residues, 1–21, serve as a signal peptide directing secretion; the sequence is MITSVLRYVLALYFCMGIAHG. The Laminin N-terminal domain occupies 43–290; it reads RPVRCVPEFI…SMGELAVGGR (248 aa). 3 N-linked (GlcNAc...) asparagine glycosylation sites follow: N114, N128, and N268. C117 and C149 are joined by a disulfide. Cystine bridges form between C291–C300, C293–C310, C312–C321, C324–C344, C347–C356, C349–C374, C377–C386, C389–C407, C410–C422, C412–C429, C431–C440, C443–C457, C478–C547, and C494–C604. 3 consecutive Laminin EGF-like domains span residues 291–346, 347–409, and 410–459; these read CKCN…SCVA, CNCN…ACKS, and CGCH…PCIK. N-linked (GlcNAc...) asparagine glycosylation occurs at N368. N423 carries N-linked (GlcNAc...) asparagine glycosylation. In terms of domain architecture, NTR spans 478 to 604; it reads CSKCRIVPKR…FSKKDKLGQC (127 aa). The N-linked (GlcNAc...) asparagine glycan is linked to N564.

Binds to unc-5 and unc-40 receptors.

Its subcellular location is the secreted. It is found in the extracellular space. The protein resides in the extracellular matrix. It localises to the basement membrane. Functionally, component of an extracellular matrix cue that guides dorsoventral migrations on the epidermis. Required for the guidance of pioneer axons and migrating cells along the body wall. In particular, it is required for the guidance of axons from neurons, including SubL neurons and AIY interneurons, into the nerve ring. During gonad morphogenesis, involved in distal tip cell (DTC) migration from the dorsal side of the hermaphrodite body to the midbody to allow for formation of gonad arms. Its association with either unc-40 or unc-5 receptors will lead to axon attraction or repulsion, respectively. Involved in dendritic morphogenesis; may act by association with unc-40 at the tips of growing dendrites for interaction with unc-5 on the apposing branch to induce mutual repulsion. Involved in the positioning of ray 1, the most anterior ray sensilium, in the male tail. Required for the formation of synapses between the AVA interneurons and the PHB sensory neurons. This is Netrin unc-6 from Caenorhabditis elegans.